A 318-amino-acid polypeptide reads, in one-letter code: HPr kinase/phosphorylase (318 aa).

Residues His-146 and Lys-167 contribute to the active site. Residue 161-168 participates in ATP binding; it reads GESGLGKS. Ser-168 is a binding site for Mg(2+). Asp-185 functions as the Proton acceptor; for phosphorylation activity. Proton donor; for dephosphorylation activity in the catalytic mechanism. The segment at 209 to 218 is important for the catalytic mechanism of both phosphorylation and dephosphorylation; it reads LEVRGIGLLD. Position 210 (Glu-210) interacts with Mg(2+). Arg-252 is a catalytic residue. Residues 273–278 are important for the catalytic mechanism of dephosphorylation; it reads QVVAGR.

It belongs to the HPrK/P family. As to quaternary structure, homohexamer. Mg(2+) serves as cofactor.

It carries out the reaction [HPr protein]-L-serine + ATP = [HPr protein]-O-phospho-L-serine + ADP + H(+). It catalyses the reaction [HPr protein]-O-phospho-L-serine + phosphate + H(+) = [HPr protein]-L-serine + diphosphate. Its function is as follows. Catalyzes the ATP- as well as the pyrophosphate-dependent phosphorylation of a specific serine residue in HPr, a phosphocarrier protein of the phosphoenolpyruvate-dependent sugar phosphotransferase system (PTS). HprK/P also catalyzes the pyrophosphate-producing, inorganic phosphate-dependent dephosphorylation (phosphorolysis) of seryl-phosphorylated HPr (P-Ser-HPr). This Acidovorax sp. (strain JS42) protein is HPr kinase/phosphorylase.